We begin with the raw amino-acid sequence, 477 residues long: Regulator of G-protein signaling 7 (477 aa).

Residues E37 to T112 enclose the DEP domain. A phosphoserine mark is found at S229 and S241. The segment at D236 to E257 is disordered. T243 carries the phosphothreonine modification. The region spanning E255–L316 is the G protein gamma domain. Residues G333–L448 form the RGS domain. S434 carries the post-translational modification Phosphoserine.

In terms of assembly, interacts with GNB5, forming the RGS7-GNB5 complex. Interacts with GPR158; promotes the GTPase activator activity of the RGS7-GNB5 complex in absence of glycine, in contrast GTPase activator activity of the RGS7-GNB5 complex is inhibited in presence of glycine. Interacts with GPR179. Interacts with PKD1; this prevents rapid proteasomal degradation. Interacts with RGS7BP, leading to regulate the subcellular location of the heterodimer formed with GNB5. Interacts (phosphorylated form) with 14-3-3 protein YWHAQ. Interacts with SNAPIN. Interacts with GNAI1. Interacts with GNAO1, GNAI3 and GNAZ. Palmitoylated. In terms of processing, ubiquitinated, leading to rapid proteasomal degradation. Post-translationally, phosphorylation and subsequent interaction with 14-3-3 proteins inhibits GAP activity. As to expression, brain-specific. Predominantly cerebellar granule cells.

It localises to the cytoplasm. It is found in the cytosol. The protein resides in the cell membrane. The protein localises to the membrane. Functionally, GTPase activator component of the RGS7-GNB5 complex that regulates G protein-coupled receptor signaling cascades. The RGS7-GNB5 complex acts as an inhibitor signal transduction by promoting the GTPase activity of G protein alpha subunits, such as GNAO1, thereby driving them into their inactive GDP-bound form. May play a role in synaptic vesicle exocytosis. Glycine-dependent regulation of the RGS7-GNB5 complex by GPR158 affects mood and cognition via its ability to regulate neuronal excitability in L2/L3 pyramidal neurons of the prefrontal cortex. Modulates the activity of potassium channels that are activated by GNAO1 in response to muscarinic acetylcholine receptor M2/CHRM2 signaling. The sequence is that of Regulator of G-protein signaling 7 (Rgs7) from Rattus norvegicus (Rat).